The chain runs to 62 residues: Beta-defensin 33 (62 aa).

The N-terminal stretch at 1–20 (MRLLFLLFLLLVCLAQKTSG) is a signal peptide. 3 disulfide bridges follow: Cys-30–Cys-59, Cys-37–Cys-52, and Cys-45–Cys-60.

It belongs to the beta-defensin family.

It localises to the secreted. Functionally, has antibacterial activity. In Rattus norvegicus (Rat), this protein is Beta-defensin 33 (Defb33).